Consider the following 237-residue polypeptide: Phosphoribosylaminoimidazole-succinocarboxamide synthase (237 aa).

Belongs to the SAICAR synthetase family.

It carries out the reaction 5-amino-1-(5-phospho-D-ribosyl)imidazole-4-carboxylate + L-aspartate + ATP = (2S)-2-[5-amino-1-(5-phospho-beta-D-ribosyl)imidazole-4-carboxamido]succinate + ADP + phosphate + 2 H(+). Its pathway is purine metabolism; IMP biosynthesis via de novo pathway; 5-amino-1-(5-phospho-D-ribosyl)imidazole-4-carboxamide from 5-amino-1-(5-phospho-D-ribosyl)imidazole-4-carboxylate: step 1/2. The polypeptide is Phosphoribosylaminoimidazole-succinocarboxamide synthase (Psychrobacter cryohalolentis (strain ATCC BAA-1226 / DSM 17306 / VKM B-2378 / K5)).